Consider the following 334-residue polypeptide: Glycerol-3-phosphate dehydrogenase [NAD(P)+] (334 aa).

Ser14, Tyr15, Arg35, and Lys109 together coordinate NADPH. The sn-glycerol 3-phosphate site is built by Lys109, Gly138, and Thr140. Ala142 is an NADPH binding site. Sn-glycerol 3-phosphate contacts are provided by Lys194, Asp247, Ser257, Arg258, and Asn259. The active-site Proton acceptor is Lys194. Arg258 lines the NADPH pocket. NADPH contacts are provided by Val282 and Glu284.

It belongs to the NAD-dependent glycerol-3-phosphate dehydrogenase family.

The protein resides in the cytoplasm. It carries out the reaction sn-glycerol 3-phosphate + NAD(+) = dihydroxyacetone phosphate + NADH + H(+). The catalysed reaction is sn-glycerol 3-phosphate + NADP(+) = dihydroxyacetone phosphate + NADPH + H(+). It functions in the pathway membrane lipid metabolism; glycerophospholipid metabolism. Catalyzes the reduction of the glycolytic intermediate dihydroxyacetone phosphate (DHAP) to sn-glycerol 3-phosphate (G3P), the key precursor for phospholipid synthesis. This chain is Glycerol-3-phosphate dehydrogenase [NAD(P)+], found in Colwellia psychrerythraea (strain 34H / ATCC BAA-681) (Vibrio psychroerythus).